Here is a 331-residue protein sequence, read N- to C-terminus: Adenosine deaminase (331 aa).

Positions 12 and 14 each coordinate Zn(2+). The substrate site is built by His14, Asp16, and Gly170. A Zn(2+)-binding site is contributed by His197. Residue Glu200 is the Proton donor of the active site. Asp278 is a Zn(2+) binding site. Asp279 contacts substrate.

Belongs to the metallo-dependent hydrolases superfamily. Adenosine and AMP deaminases family. Adenosine deaminase subfamily. Zn(2+) is required as a cofactor.

The enzyme catalyses adenosine + H2O + H(+) = inosine + NH4(+). The catalysed reaction is 2'-deoxyadenosine + H2O + H(+) = 2'-deoxyinosine + NH4(+). Functionally, catalyzes the hydrolytic deamination of adenosine and 2-deoxyadenosine. The sequence is that of Adenosine deaminase from Shewanella sp. (strain MR-7).